A 239-amino-acid chain; its full sequence is Purine nucleoside phosphorylase DeoD-type (239 aa).

His5 contributes to the a purine D-ribonucleoside binding site. Residues Gly21, Arg25, Arg44, and 88–91 (RVGS) each bind phosphate. A purine D-ribonucleoside is bound by residues 180 to 182 (EME) and 204 to 205 (SD). The active-site Proton donor is Asp205.

The protein belongs to the PNP/UDP phosphorylase family. Homohexamer; trimer of homodimers.

The enzyme catalyses a purine D-ribonucleoside + phosphate = a purine nucleobase + alpha-D-ribose 1-phosphate. It catalyses the reaction a purine 2'-deoxy-D-ribonucleoside + phosphate = a purine nucleobase + 2-deoxy-alpha-D-ribose 1-phosphate. Functionally, catalyzes the reversible phosphorolytic breakdown of the N-glycosidic bond in the beta-(deoxy)ribonucleoside molecules, with the formation of the corresponding free purine bases and pentose-1-phosphate. The sequence is that of Purine nucleoside phosphorylase DeoD-type from Pectobacterium atrosepticum (strain SCRI 1043 / ATCC BAA-672) (Erwinia carotovora subsp. atroseptica).